A 153-amino-acid chain; its full sequence is Endoribonuclease YbeY (153 aa).

Zn(2+) contacts are provided by H112, H116, and H122.

It belongs to the endoribonuclease YbeY family. It depends on Zn(2+) as a cofactor.

It localises to the cytoplasm. Its function is as follows. Single strand-specific metallo-endoribonuclease involved in late-stage 70S ribosome quality control and in maturation of the 3' terminus of the 16S rRNA. The sequence is that of Endoribonuclease YbeY from Persephonella marina (strain DSM 14350 / EX-H1).